The sequence spans 662 residues: Polyadenylate-binding protein 4 (662 aa).

Residues 1–23 form a disordered region; the sequence is MAQVQAPSSHSPPPPAVVNDGAA. 4 consecutive RRM domains span residues 46 to 124, 134 to 211, 225 to 302, and 328 to 405; these read CSLY…YSSR, GNLF…PFLR, TNVY…KAQK, and LNLY…LAQR. Low complexity-rich tracts occupy residues 480–489 and 506–518; these read PMMQPGQQGP and QQPM…QMMP. Disordered regions lie at residues 480–518 and 634–662; these read PMMQ…QMMP and NQPS…NDHL. The 78-residue stretch at 558 to 635 folds into the PABC domain; that stretch reads SAGQLATSLA…ALDVLRNVNQ (78 aa). Positions 634–649 are enriched in polar residues; that stretch reads NQPSSQGSEGNKSGSP.

This sequence belongs to the polyadenylate-binding protein type-1 family. Interacts with ERD15/CID1. Interacts with Turnip mosaic virus (TuMV) VPg-Pro.

Its subcellular location is the cytoplasm. The protein resides in the nucleus. Functionally, binds the poly(A) tail of mRNA. Appears to be an important mediator of the multiple roles of the poly(A) tail in mRNA biogenesis, stability and translation. During infection with potyvirus TuMV, acts as a potential integral component of the viral replicase complex that could play an important role in the regulation of potyviral RNA-dependent RNA polymerase (RdRp). This is Polyadenylate-binding protein 4 (PAB4) from Arabidopsis thaliana (Mouse-ear cress).